Here is a 212-residue protein sequence, read N- to C-terminus: Ribosomal RNA large subunit methyltransferase E (212 aa).

Residues glycine 57, tryptophan 59, aspartate 77, aspartate 93, and aspartate 122 each contribute to the S-adenosyl-L-methionine site. Lysine 162 functions as the Proton acceptor in the catalytic mechanism.

This sequence belongs to the class I-like SAM-binding methyltransferase superfamily. RNA methyltransferase RlmE family.

It is found in the cytoplasm. It catalyses the reaction uridine(2552) in 23S rRNA + S-adenosyl-L-methionine = 2'-O-methyluridine(2552) in 23S rRNA + S-adenosyl-L-homocysteine + H(+). In terms of biological role, specifically methylates the uridine in position 2552 of 23S rRNA at the 2'-O position of the ribose in the fully assembled 50S ribosomal subunit. In Coxiella burnetii (strain CbuK_Q154) (Coxiella burnetii (strain Q154)), this protein is Ribosomal RNA large subunit methyltransferase E.